We begin with the raw amino-acid sequence, 520 residues long: Ribonuclease Y (520 aa).

The helical transmembrane segment at 3 to 23 threads the bilayer; it reads IVIVVISILLALIVGIVVGYL. Residues 81 to 118 show a composition bias toward basic and acidic residues; sequence RMEAQKQENRLMQKEENLDRKSETLDKRESSLESKEQS. The tract at residues 81-125 is disordered; it reads RMEAQKQENRLMQKEENLDRKSETLDKRESSLESKEQSLTEQQQQ. Positions 210–273 constitute a KH domain; sequence TVSVVNLPND…EIARMALEKL (64 aa). Positions 336–429 constitute an HD domain; sequence GLKHSAEVAY…VAAADALSAA (94 aa).

Belongs to the RNase Y family.

The protein resides in the cell membrane. In terms of biological role, endoribonuclease that initiates mRNA decay. The polypeptide is Ribonuclease Y (Oceanobacillus iheyensis (strain DSM 14371 / CIP 107618 / JCM 11309 / KCTC 3954 / HTE831)).